We begin with the raw amino-acid sequence, 164 residues long: Crossover junction endodeoxyribonuclease RuvC (164 aa).

Active-site residues include Asp-7, Glu-66, and Asp-138. Mg(2+) contacts are provided by Asp-7, Glu-66, and Asp-138.

This sequence belongs to the RuvC family. As to quaternary structure, homodimer which binds Holliday junction (HJ) DNA. The HJ becomes 2-fold symmetrical on binding to RuvC with unstacked arms; it has a different conformation from HJ DNA in complex with RuvA. In the full resolvosome a probable DNA-RuvA(4)-RuvB(12)-RuvC(2) complex forms which resolves the HJ. Requires Mg(2+) as cofactor.

Its subcellular location is the cytoplasm. It catalyses the reaction Endonucleolytic cleavage at a junction such as a reciprocal single-stranded crossover between two homologous DNA duplexes (Holliday junction).. Functionally, the RuvA-RuvB-RuvC complex processes Holliday junction (HJ) DNA during genetic recombination and DNA repair. Endonuclease that resolves HJ intermediates. Cleaves cruciform DNA by making single-stranded nicks across the HJ at symmetrical positions within the homologous arms, yielding a 5'-phosphate and a 3'-hydroxyl group; requires a central core of homology in the junction. The consensus cleavage sequence is 5'-(A/T)TT(C/G)-3'. Cleavage occurs on the 3'-side of the TT dinucleotide at the point of strand exchange. HJ branch migration catalyzed by RuvA-RuvB allows RuvC to scan DNA until it finds its consensus sequence, where it cleaves and resolves the cruciform DNA. In Paracoccus denitrificans (strain Pd 1222), this protein is Crossover junction endodeoxyribonuclease RuvC.